Consider the following 452-residue polypeptide: Bifunctional protein GlmU (452 aa).

The segment at Met1–Arg230 is pyrophosphorylase. UDP-N-acetyl-alpha-D-glucosamine-binding positions include Leu10–Gly13, Lys24, Gln75, and Gly80–Thr81. Residue Asp105 coordinates Mg(2+). Gly141, Glu156, Asn171, and Asn228 together coordinate UDP-N-acetyl-alpha-D-glucosamine. Asn228 serves as a coordination point for Mg(2+). The tract at residues Ala231–Asp251 is linker. Residues Gly252–Thr452 form an N-acetyltransferase region. The UDP-N-acetyl-alpha-D-glucosamine site is built by Arg317 and Lys335. His347 functions as the Proton acceptor in the catalytic mechanism. The UDP-N-acetyl-alpha-D-glucosamine site is built by Tyr350 and Asn361. Acetyl-CoA contacts are provided by residues Ala364, Asn370–Tyr371, Ser389, Thr407, and Arg424.

This sequence in the N-terminal section; belongs to the N-acetylglucosamine-1-phosphate uridyltransferase family. In the C-terminal section; belongs to the transferase hexapeptide repeat family. Homotrimer. Mg(2+) serves as cofactor.

The protein localises to the cytoplasm. It carries out the reaction alpha-D-glucosamine 1-phosphate + acetyl-CoA = N-acetyl-alpha-D-glucosamine 1-phosphate + CoA + H(+). The catalysed reaction is N-acetyl-alpha-D-glucosamine 1-phosphate + UTP + H(+) = UDP-N-acetyl-alpha-D-glucosamine + diphosphate. It participates in nucleotide-sugar biosynthesis; UDP-N-acetyl-alpha-D-glucosamine biosynthesis; N-acetyl-alpha-D-glucosamine 1-phosphate from alpha-D-glucosamine 6-phosphate (route II): step 2/2. The protein operates within nucleotide-sugar biosynthesis; UDP-N-acetyl-alpha-D-glucosamine biosynthesis; UDP-N-acetyl-alpha-D-glucosamine from N-acetyl-alpha-D-glucosamine 1-phosphate: step 1/1. Its pathway is bacterial outer membrane biogenesis; LPS lipid A biosynthesis. Its function is as follows. Catalyzes the last two sequential reactions in the de novo biosynthetic pathway for UDP-N-acetylglucosamine (UDP-GlcNAc). The C-terminal domain catalyzes the transfer of acetyl group from acetyl coenzyme A to glucosamine-1-phosphate (GlcN-1-P) to produce N-acetylglucosamine-1-phosphate (GlcNAc-1-P), which is converted into UDP-GlcNAc by the transfer of uridine 5-monophosphate (from uridine 5-triphosphate), a reaction catalyzed by the N-terminal domain. This Maricaulis maris (strain MCS10) (Caulobacter maris) protein is Bifunctional protein GlmU.